We begin with the raw amino-acid sequence, 248 residues long: Probable aquaporin TIP2-1 (248 aa).

Helical transmembrane passes span alanine 20–isoleucine 40 and alanine 54–alanine 74. The NPA 1 signature appears at asparagine 83 to alanine 85. A run of 3 helical transmembrane segments spans residues threonine 97 to leucine 119, glycine 141 to alanine 161, and leucine 168 to glycine 188. Positions asparagine 196 to alanine 198 match the NPA 2 motif. Residues tryptophan 217–glycine 237 form a helical membrane-spanning segment.

Belongs to the MIP/aquaporin (TC 1.A.8) family. TIP (TC 1.A.8.10) subfamily. As to expression, expressed in roots and anthers.

It localises to the vacuole membrane. Functionally, aquaporins facilitate the transport of water and small neutral solutes across cell membranes. May be involved in transport from the vacuolar compartment to the cytoplasm. This chain is Probable aquaporin TIP2-1 (TIP2-1), found in Oryza sativa subsp. japonica (Rice).